A 61-amino-acid polypeptide reads, in one-letter code: Metallothionein-1 (61 aa).

N-acetylmethionine is present on Met-1. Positions 1–29 (MDPNCSCSTGGSCTCSSSCGCKNCKCTSC) are beta. A divalent metal cation contacts are provided by Cys-5, Cys-7, Cys-13, Cys-15, Cys-19, Cys-21, Cys-24, Cys-26, Cys-29, Cys-33, Cys-34, Cys-36, Cys-37, Cys-41, Cys-44, Cys-48, Cys-50, Cys-57, Cys-59, and Cys-60. Residues 30-61 (KKSCCSCCPVGCSKCAQGCVCKGASDKCTCCA) form an alpha region.

It belongs to the metallothionein superfamily. Type 1 family.

Metallothioneins have a high content of cysteine residues that bind various heavy metals; these proteins are transcriptionally regulated by both heavy metals and glucocorticoids. This Rattus norvegicus (Rat) protein is Metallothionein-1 (Mt1).